The primary structure comprises 167 residues: Shikimate kinase (167 aa).

12-17 serves as a coordination point for ATP; it reads GSGKTT. Threonine 16 is a Mg(2+) binding site. Substrate is bound by residues aspartate 34, arginine 58, and glycine 80. Arginine 117 contributes to the ATP binding site. Arginine 135 lines the substrate pocket. Arginine 152 is a binding site for ATP.

The protein belongs to the shikimate kinase family. In terms of assembly, monomer. It depends on Mg(2+) as a cofactor.

It localises to the cytoplasm. The catalysed reaction is shikimate + ATP = 3-phosphoshikimate + ADP + H(+). It functions in the pathway metabolic intermediate biosynthesis; chorismate biosynthesis; chorismate from D-erythrose 4-phosphate and phosphoenolpyruvate: step 5/7. Catalyzes the specific phosphorylation of the 3-hydroxyl group of shikimic acid using ATP as a cosubstrate. The protein is Shikimate kinase of Salinispora arenicola (strain CNS-205).